The sequence spans 858 residues: Taste receptor type 1 member 3 (858 aa).

The N-terminal stretch at 1–20 (MPALAIMGLSLAAFLELGMG) is a signal peptide. Residues 21–572 (ASLCLSQQFK…RPKFLAWGEP (552 aa)) are Extracellular-facing. Asn58 is a glycosylation site (N-linked (GlcNAc...) asparagine; when associated with variant T-60). N-linked (GlcNAc...) asparagine glycans are attached at residues Asn85, Asn130, Asn203, Asn264, Asn379, Asn387, Asn418, Asn439, and Asn482. A helical membrane pass occupies residues 573 to 593 (VVLSLLLLLCLVLGLALAALG). Over 594 to 610 (LSVHHWDSPLVQASGGS) the chain is Cytoplasmic. The chain crosses the membrane as a helical span at residues 611 to 631 (QFCFGLICLGLFCLSVLLFPG). Topologically, residues 632–644 (RPSSASCLAQQPM) are extracellular. The helical transmembrane segment at 645-665 (AHLPLTGCLSTLFLQAAETFV) threads the bilayer. The Cytoplasmic portion of the chain corresponds to 666–687 (ESELPLSWANWLCSYLRGLWAW). The helical transmembrane segment at 688–708 (LVVLLATFVEAALCAWYLIAF) threads the bilayer. Topologically, residues 709 to 735 (PPEVVTDWSVLPTEVLEHCHVRSWVSL) are extracellular. A helical membrane pass occupies residues 736–756 (GLVHITNAMLAFLCFLGTFLV). At 757-767 (QSQPGRYNRAR) the chain is on the cytoplasmic side. Residues 768–788 (GLTFAMLAYFITWVSFVPLLA) form a helical membrane-spanning segment. Over 789–796 (NVQVAYQP) the chain is Extracellular. The chain crosses the membrane as a helical span at residues 797–817 (AVQMGAILVCALGILVTFHLP). The Cytoplasmic segment spans residues 818–858 (KCYVLLWLPKLNTQEFFLGRNAKKAADENSGGGEAAQGHNE).

It belongs to the G-protein coupled receptor 3 family. TAS1R subfamily. In terms of assembly, forms homodimers or heterodimers with TAS1R1 and TAS1R2. Post-translationally, the Thr-60 variant is predicted to introduce a novel N-linked glycosylation site at Asn-58. The addition of even a short carbohydrate group at Asn-58 is predicted to disrupt one of the contact surfaces required for stability of a dimer. Therefore a Thr-60 variant N-glycosylated at Asn-58 is predicted to be precluded from forming homodimers or heterodimers. In terms of tissue distribution, expressed in circumvallate, foliate and fungiform taste papillae as well as in taste buds on the palate. Also expressed in testis. Not expressed in brain, heart, kidney, liver or spleen. The topographic distribution in various taste papillae is different from those of other T1R members.

The protein resides in the cell membrane. Putative taste receptor. TAS1R1/TAS1R3 responds to the umami taste stimulus (the taste of monosodium glutamate) and also to most of the 20 standard L-amino acids, but not to their D-enantiomers or other compounds. TAS1R2/TAS1R3 recognizes diverse natural and synthetic sweeteners. TAS1R3 is essential for the recognition and response to the disaccharide trehalose. Sequence differences within and between species can significantly influence the selectivity and specificity of taste responses. This chain is Taste receptor type 1 member 3 (Tas1r3), found in Mus musculus (Mouse).